Reading from the N-terminus, the 282-residue chain is Putative 4-diphosphocytidyl-2-C-methyl-D-erythritol kinase (282 aa).

Lys9 is a catalytic residue. Residue 93-103 coordinates ATP; it reads PVSAGLAGGSA. Residue Asp135 is part of the active site.

Belongs to the GHMP kinase family. IspE subfamily.

The enzyme catalyses 4-CDP-2-C-methyl-D-erythritol + ATP = 4-CDP-2-C-methyl-D-erythritol 2-phosphate + ADP + H(+). Catalyzes the phosphorylation of the position 2 hydroxy group of 4-diphosphocytidyl-2C-methyl-D-erythritol. This Staphylococcus haemolyticus (strain JCSC1435) protein is Putative 4-diphosphocytidyl-2-C-methyl-D-erythritol kinase.